A 370-amino-acid polypeptide reads, in one-letter code: Erythronate-4-phosphate dehydrogenase (370 aa).

S45 and T66 together coordinate substrate. Residues D142 and T169 each coordinate NAD(+). R202 is an active-site residue. D228 is a binding site for NAD(+). E233 is an active-site residue. Residue H250 is the Proton donor of the active site. G253 lines the NAD(+) pocket. Y254 lines the substrate pocket.

The protein belongs to the D-isomer specific 2-hydroxyacid dehydrogenase family. PdxB subfamily. In terms of assembly, homodimer.

It is found in the cytoplasm. It carries out the reaction 4-phospho-D-erythronate + NAD(+) = (R)-3-hydroxy-2-oxo-4-phosphooxybutanoate + NADH + H(+). It participates in cofactor biosynthesis; pyridoxine 5'-phosphate biosynthesis; pyridoxine 5'-phosphate from D-erythrose 4-phosphate: step 2/5. Functionally, catalyzes the oxidation of erythronate-4-phosphate to 3-hydroxy-2-oxo-4-phosphonooxybutanoate. The protein is Erythronate-4-phosphate dehydrogenase of Teredinibacter turnerae (strain ATCC 39867 / T7901).